Here is a 457-residue protein sequence, read N- to C-terminus: UDP-N-acetylmuramate--L-alanyl-gamma-D-glutamyl-meso-2,6-diaminoheptandioate ligase (457 aa).

Gly110–Thr116 lines the ATP pocket.

It belongs to the MurCDEF family. Mpl subfamily. Mg(2+) is required as a cofactor.

Its subcellular location is the secreted. It catalyses the reaction UDP-N-acetyl-alpha-D-muramate + L-alanyl-gamma-D-glutamyl-meso-2,6-diaminopimelate + ATP = UDP-N-acetyl-alpha-D-muramoyl-L-alanyl-gamma-D-glutamyl-meso-2,6-diaminopimelate + ADP + phosphate + H(+). It participates in cell wall biogenesis; peptidoglycan recycling. Functionally, reutilizes the intact tripeptide L-alanyl-gamma-D-glutamyl-meso-diaminopimelate by linking it to UDP-N-acetylmuramate. The enzyme can also use the tetrapeptide L-alanyl-gamma-D-glutamyl-meso-2,6-diaminoheptanedioyl-D-alanine or the pentapeptide L-alanyl-gamma-D-glutamyl-meso-2,6-diaminoheptandioyl-D-alanyl-D-alanine in vivo and in vitro. The sequence is that of UDP-N-acetylmuramate--L-alanyl-gamma-D-glutamyl-meso-2,6-diaminoheptandioate ligase from Escherichia coli (strain K12).